Here is a 356-residue protein sequence, read N- to C-terminus: Phosphoribosylformylglycinamidine cyclo-ligase (356 aa).

This sequence belongs to the AIR synthase family.

The protein resides in the cytoplasm. It catalyses the reaction 2-formamido-N(1)-(5-O-phospho-beta-D-ribosyl)acetamidine + ATP = 5-amino-1-(5-phospho-beta-D-ribosyl)imidazole + ADP + phosphate + H(+). Its pathway is purine metabolism; IMP biosynthesis via de novo pathway; 5-amino-1-(5-phospho-D-ribosyl)imidazole from N(2)-formyl-N(1)-(5-phospho-D-ribosyl)glycinamide: step 2/2. The polypeptide is Phosphoribosylformylglycinamidine cyclo-ligase (Sinorhizobium medicae (strain WSM419) (Ensifer medicae)).